The following is a 224-amino-acid chain: uncharacterized protein (224 aa).

3 residues coordinate S-adenosyl-L-methionine: Gly177, Ile197, and Leu206.

This sequence belongs to the class IV-like SAM-binding methyltransferase superfamily. RNA methyltransferase TrmH family.

This is an uncharacterized protein from Archaeoglobus fulgidus (strain ATCC 49558 / DSM 4304 / JCM 9628 / NBRC 100126 / VC-16).